We begin with the raw amino-acid sequence, 200 residues long: UPF0488 protein CG14286 (200 aa).

Disordered regions lie at residues 1 to 28 (MHKRRTAKSINKPPPIQGAIKKPTPVAE) and 139 to 174 (KDFRFNFPSPAEDTSSKEPQPVQDFDPSSLQPAEAG).

It belongs to the UPF0488 family.

The polypeptide is UPF0488 protein CG14286 (Drosophila melanogaster (Fruit fly)).